The following is a 127-amino-acid chain: Major sperm protein 33 (127 aa).

Ala2 carries the post-translational modification N-acetylalanine. Residues 9–126 (DIQTQPGTKI…RRKNLPIEYN (118 aa)) form the MSP domain.

Sperm.

Its subcellular location is the cell projection. It is found in the pseudopodium. The protein localises to the cytoplasm. It localises to the cytoskeleton. Central component in molecular interactions underlying sperm crawling. Forms an extensive filament system that extends from sperm villipoda, along the leading edge of the pseudopod. The protein is Major sperm protein 33 (msp-33) of Caenorhabditis elegans.